The primary structure comprises 544 residues: Chaperonin GroEL (544 aa).

Residues 29–32 (TMGP), Lys50, 86–90 (DGTTT), Gly414, 477–479 (NAV), and Asp493 contribute to the ATP site.

It belongs to the chaperonin (HSP60) family. In terms of assembly, forms a cylinder of 14 subunits composed of two heptameric rings stacked back-to-back. Interacts with the co-chaperonin GroES.

The protein localises to the cytoplasm. The catalysed reaction is ATP + H2O + a folded polypeptide = ADP + phosphate + an unfolded polypeptide.. In terms of biological role, together with its co-chaperonin GroES, plays an essential role in assisting protein folding. The GroEL-GroES system forms a nano-cage that allows encapsulation of the non-native substrate proteins and provides a physical environment optimized to promote and accelerate protein folding. This Campylobacter curvus (strain 525.92) protein is Chaperonin GroEL.